The primary structure comprises 267 residues: Transcription factor HES-1 (267 aa).

The tract at residues 1 to 45 (MPADLMEKNSSSPVAATPASMSNTPDKPKTASEHRKSSKPIMEKR) is disordered. The segment covering 8–25 (KNSSSPVAATPASMSNTP) has biased composition (polar residues). Basic and acidic residues predominate over residues 26-35 (DKPKTASEHR). In terms of domain architecture, bHLH spans 34-91 (HRKSSKPIMEKRRRARINESLGQLKTLILDALKKDSSRHSKLEKADILEMTVKHLRNL). Residues 110 to 143 (YRAGFSECMNEVTRFLSTCEGVNTDVRTRLLGHL) form the Orange domain. Positions 264-267 (WRPW) match the WRPW motif motif.

Transcription repression requires formation of a complex with a corepressor protein of the Groucho/TLE family. Interacts with the bHLH protein hes2, and binds DNA in the form of a heterodimer with the bHLH protein hey1/hrt1. Interacts with the bHLH protein hes6; this interaction may inhibit the transcriptional repressor activity.

It is found in the nucleus. Functionally, transcriptional repressor of a subset of early mesodermal genes including myod1 and t/bra. Binds DNA on N-box motifs: 5'-CACNAG-3'. Acts as a negative regulator of myogenesis, mediating Notch signaling to repress expression of myod1. This Xenopus tropicalis (Western clawed frog) protein is Transcription factor HES-1.